The chain runs to 509 residues: MDVFYPLKSTVAKFNECFPAILFIVLSAVAGIVLPLLLFLRSKRRSSVGLPPGKLGYPFIGESLLFLKALRSNTVEQFLDERVKNFGNVFKTSLIGHPTVVLCGPAGNRLILANEEKLVQMSWPKSSMKLMGEKSITAKRGEGHMIIRSALQGFFSPGALQKYIGQMSKTIENHINEKWKGNDQVSVVALVGDLVFDISACLFFNINEKHERERLFELLEIIAVGVLAVPVDLPGFAYHRALQARSKLNAILSGLIEKRKMDLSSGLATSNQDLLSVFLTFKDDRGNPCSDEEILDNFSGLLHGSYDTTVSAMACVFKLLSSNPECYEKVVQEQLGILSNKLEGDEITWKDVKSMKYTWQVVQETLRLYPSIFGSFRQAITDIHYNGYIIPKGWKLLWTPYTTHPKEMYFSEPEKFLPSRFDQEGKLVAPYTFLPFGGGQRSCPGWEFSKMEILLSVHHFVKTFSTFTPVDPAEIIARDSLCPLPSNGFSVKLFPRSYSLHTGNQVKKI.

Helical transmembrane passes span 20–40 (AILF…LLFL), 186–206 (SVVA…FFNI), and 218–238 (LLEI…GFAY). Residue C443 participates in heme binding.

Belongs to the cytochrome P450 family.

It localises to the microsome membrane. It carries out the reaction 10beta-hydroxytaxa-4(20),11-dien-5alpha-yl acetate + NADPH + O2 + H(+) = 10beta,14beta-dihydroxytaxa-4(20),11-dien-5alpha-yl acetate + NADP(+) + H2O. The protein operates within alkaloid biosynthesis; taxol biosynthesis. Its function is as follows. Catalyzes the conversion of 5-alpha-acetoxy-10beta-ol to 5-alpha-acetoxy-10beta,14beta-dihydroxy taxadiene. Also acts on taxa-4(20),11-dien-5-alpha-yl acetate. The polypeptide is Taxoid 14-beta-hydroxylase (Taxus cuspidata (Japanese yew)).